An 889-amino-acid chain; its full sequence is Cytoplasmic aconitate hydratase (889 aa).

Substrate contacts are provided by residues Gln-86 and 205–207; that span reads DSH. Residues Cys-437, Cys-503, and Cys-506 each contribute to the [4Fe-4S] cluster site. Substrate is bound by residues Arg-536 and Arg-541. A Phosphothreonine modification is found at Thr-628. Residues Arg-699 and 779 to 780 contribute to the substrate site; that span reads SR.

It belongs to the aconitase/IPM isomerase family. As to quaternary structure, interacts (when associated with the 4Fe-4S) with FBXL5. Interacts with frataxin(81-210). [4Fe-4S] cluster is required as a cofactor.

The protein localises to the cytoplasm. It localises to the cytosol. It catalyses the reaction citrate = D-threo-isocitrate. Bifunctional iron sensor that switches between 2 activities depending on iron availability. Iron deprivation, promotes its mRNA binding activity through which it regulates the expression of genes involved in iron uptake, sequestration and utilization. Binds to iron-responsive elements (IRES) in the untranslated region of target mRNAs preventing for instance the translation of ferritin and aminolevulinic acid synthase and stabilizing the transferrin receptor mRNA. Functionally, conversely, when cellular iron levels are high, binds a 4Fe-4S cluster which precludes RNA binding activity and promotes the aconitase activity, the isomerization of citrate to isocitrate via cis-aconitate. The sequence is that of Cytoplasmic aconitate hydratase (ACO1) from Homo sapiens (Human).